Consider the following 201-residue polypeptide: Proteasome subunit beta type-2 (201 aa).

M1 is subject to N-acetylmethionine.

It belongs to the peptidase T1B family. The 26S proteasome consists of a 20S proteasome core and two 19S regulatory subunits. The 20S proteasome core is a barrel-shaped complex made of 28 subunits that are arranged in four stacked rings. The two outer rings are each formed by seven alpha subunits, and the two inner rings are formed by seven beta subunits. The proteolytic activity is exerted by three beta-subunits PSMB5, PSMB6 and PSMB7. As to quaternary structure, (Microbial infection) Interacts with HIV-1 protein Tat.

It is found in the cytoplasm. It localises to the nucleus. Functionally, non-catalytic component of the 20S core proteasome complex involved in the proteolytic degradation of most intracellular proteins. This complex plays numerous essential roles within the cell by associating with different regulatory particles. Associated with two 19S regulatory particles, forms the 26S proteasome and thus participates in the ATP-dependent degradation of ubiquitinated proteins. The 26S proteasome plays a key role in the maintenance of protein homeostasis by removing misfolded or damaged proteins that could impair cellular functions, and by removing proteins whose functions are no longer required. Associated with the PA200 or PA28, the 20S proteasome mediates ubiquitin-independent protein degradation. This type of proteolysis is required in several pathways including spermatogenesis (20S-PA200 complex) or generation of a subset of MHC class I-presented antigenic peptides (20S-PA28 complex). This Homo sapiens (Human) protein is Proteasome subunit beta type-2.